The chain runs to 352 residues: MSSRKIIHIDMDAFYASVELREQPHLKGRPVVVAWEGARSVICAASYEARQFGLHSAMSVATAKRLCPQAVYVPPHFDLYRQVSAQIHAVFRRYTDLIEPLSLDEAYLDVTRNFKNIPYASEVAKEIRAAIFAETGLTASAGIAPNKFLAKIASDWRKPNGQFVLPPHKVMAFLETLPLGKIPGVGKVTLKKMQSLGMQTAGDLRRFERGELLNHFGRYGYRLYDLARGTDERPVKAERECLQISTEITLPEDLPLEQAAGHLPHLAEDLWRQITRKNVEAQSVTLKLKTYDFRIITRTLTYSSVLPDCTALLQAAQMLMARVPPQTEDAFRLIGIGVGHLVPKNQQQDLWA.

The UmuC domain maps to 6–186; that stretch reads IIHIDMDAFY…LPLGKIPGVG (181 aa). 2 residues coordinate Mg(2+): aspartate 10 and aspartate 104. Residue glutamate 105 is part of the active site.

Belongs to the DNA polymerase type-Y family. As to quaternary structure, monomer. Mg(2+) serves as cofactor.

It localises to the cytoplasm. The enzyme catalyses DNA(n) + a 2'-deoxyribonucleoside 5'-triphosphate = DNA(n+1) + diphosphate. Poorly processive, error-prone DNA polymerase involved in untargeted mutagenesis. Copies undamaged DNA at stalled replication forks, which arise in vivo from mismatched or misaligned primer ends. These misaligned primers can be extended by PolIV. Exhibits no 3'-5' exonuclease (proofreading) activity. May be involved in translesional synthesis, in conjunction with the beta clamp from PolIII. This is DNA polymerase IV from Neisseria meningitidis serogroup A / serotype 4A (strain DSM 15465 / Z2491).